A 510-amino-acid polypeptide reads, in one-letter code: uncharacterized protein (510 aa).

The first 19 residues, 1–19, serve as a signal peptide directing secretion; sequence MLILLILYFLFLQLHIFDS. The helical transmembrane segment at 28–48 threads the bilayer; it reads IYIHYAICKFIFLLEIYKLIA.

It is found in the host membrane. This is an uncharacterized protein from Sulfolobus islandicus rod-shaped virus 1 (SIRV-1).